Reading from the N-terminus, the 60-residue chain is Beta-toxin BotIT2 (60 aa).

Residues 1 to 60 (DGYIKGYKGCKITCVINDDYCDTECKAEGGTYGYCWKWGLACWCEDLPDEKRWKSETNTC) enclose the LCN-type CS-alpha/beta domain. 4 cysteine pairs are disulfide-bonded: Cys10–Cys60, Cys14–Cys35, Cys21–Cys42, and Cys25–Cys44.

The protein belongs to the long (4 C-C) scorpion toxin superfamily. Sodium channel inhibitor family. Beta subfamily. Expressed by the venom gland.

Its subcellular location is the secreted. Functionally, beta toxins bind voltage-independently at site-4 of sodium channels (Nav) and shift the voltage of activation toward more negative potentials thereby affecting sodium channel activation and promoting spontaneous and repetitive firing. This toxin specifically acts by inducing a new current with very slow activation/deactivation kinetics due to the transformation of normal fast channels into slow ones. It possess properties of excitatory and depressant toxins. It is highly active on insects and less active on mammals. The protein is Beta-toxin BotIT2 of Buthus occitanus tunetanus (Common European scorpion).